Reading from the N-terminus, the 690-residue chain is Potassium-transporting ATPase ATP-binding subunit (690 aa).

A run of 4 helical transmembrane segments spans residues 49–69 (SPVM…CFVP), 72–92 (AVPT…VLFA), 229–249 (VALD…VVTL), and 253–273 (ALFA…VTLI). D317 (4-aspartylphosphate intermediate) is an active-site residue. ATP-binding positions include D354, E358, 385-392 (FSAETRLS), and K403. The Mg(2+) site is built by D526 and D530. 3 helical membrane passes run 596–616 (FAIL…LNVM), 624–644 (AILS…PLAL), and 662–682 (LLIY…AIDL).

It belongs to the cation transport ATPase (P-type) (TC 3.A.3) family. Type IA subfamily. As to quaternary structure, the system is composed of three essential subunits: KdpA, KdpB and KdpC.

It is found in the cell inner membrane. It carries out the reaction K(+)(out) + ATP + H2O = K(+)(in) + ADP + phosphate + H(+). Its function is as follows. Part of the high-affinity ATP-driven potassium transport (or Kdp) system, which catalyzes the hydrolysis of ATP coupled with the electrogenic transport of potassium into the cytoplasm. This subunit is responsible for energy coupling to the transport system and for the release of the potassium ions to the cytoplasm. The sequence is that of Potassium-transporting ATPase ATP-binding subunit from Pseudomonas aeruginosa (strain ATCC 15692 / DSM 22644 / CIP 104116 / JCM 14847 / LMG 12228 / 1C / PRS 101 / PAO1).